Reading from the N-terminus, the 1092-residue chain is Elongation factor 3 (1092 aa).

An ADP-binding site is contributed by Val-92. HEAT repeat units follow at residues 95–133 (MVKTKILHGIATGLHNTKQPVAREGAITAIETLIKSPVS), 138–175 (PYMITFIPVLLERLSDKAKTVCLAADSALKALITRLTP), 177–214 (ATKQVLPLLLAGIEYSQKWQTKVGALELMQSLSKTAPR), 218–255 (TAVPDLVPPLSEVMHDTKAEAKNAGRQTMEAICELINN), 257–293 (DIEKFIPALIDTIANPEKVPDTVHLLGATTFVSEVLP), 294–331 (PTLAIMVPLLSRGLNERQTAIKRKAAVIIINMCKLVEK), and 333–370 (QIIAPFLPRLLPTLEKIQDDVADPECRQVCQNATKILT). An ADP-binding site is contributed by Glu-454. ABC transporter domains follow at residues 486–704 (EELC…YYEL) and 730–1044 (LKVQ…DKNK). ADP-binding residues include Asn-766, Glu-973, Asn-976, and His-1002. Disordered stretches follow at residues 1023 to 1044 (TPTGHNWVSGQGSGPRLEDKNK) and 1063 to 1092 (SKLSGKDLRKKRKEREARRKRGEEVSDDDE). Over residues 1063-1075 (SKLSGKDLRKKRK) the composition is skewed to basic residues. Residues 1076–1086 (EREARRKRGEE) are compositionally biased toward basic and acidic residues.

This sequence belongs to the ABC transporter superfamily. ABCF family. EF3 subfamily.

The protein localises to the cytoplasm. It localises to the cytosol. It carries out the reaction ATP + H2O = ADP + phosphate + H(+). It participates in protein biosynthesis; polypeptide chain elongation. Its function is as follows. Ribosome-dependent ATPase that functions in cytoplasmic translation elongation. Required for the ATP-dependent release of deacylated tRNA from the ribosomal E-site during protein biosynthesis. Stimulates the eEF1A-dependent binding of aminoacyl-tRNA to the ribosomal A-site, which has reduced affinity for tRNA as long as the E-site is occupied. Assists translation termination by stimulating the release of nascent protein from the ribosome by release factors. In Gonapodya prolifera (strain JEL478) (Monoblepharis prolifera), this protein is Elongation factor 3.